The following is a 284-amino-acid chain: 4-diphosphocytidyl-2-C-methyl-D-erythritol kinase (284 aa).

K9 is an active-site residue. 90–100 (PLVSGLGGDSS) serves as a coordination point for ATP. The active site involves D132.

Belongs to the GHMP kinase family. IspE subfamily.

It catalyses the reaction 4-CDP-2-C-methyl-D-erythritol + ATP = 4-CDP-2-C-methyl-D-erythritol 2-phosphate + ADP + H(+). It participates in isoprenoid biosynthesis; isopentenyl diphosphate biosynthesis via DXP pathway; isopentenyl diphosphate from 1-deoxy-D-xylulose 5-phosphate: step 3/6. Its function is as follows. Catalyzes the phosphorylation of the position 2 hydroxy group of 4-diphosphocytidyl-2C-methyl-D-erythritol. This is 4-diphosphocytidyl-2-C-methyl-D-erythritol kinase from Dehalococcoides mccartyi (strain ATCC BAA-2266 / KCTC 15142 / 195) (Dehalococcoides ethenogenes (strain 195)).